Here is a 1020-residue protein sequence, read N- to C-terminus: Protein SCAR3 (1020 aa).

Disordered regions lie at residues 167 to 198, 351 to 382, and 802 to 827; these read NLSQGNKKFQKDKKHCKMKKKKTSSRSRDMSR, DEKPSYGEGIGGVDFHSKDNENDKSESGLRKR, and DYLSDNHSLSNSEPWEESSDSHGRKE. Positions 174 to 191 are enriched in basic residues; sequence KFQKDKKHCKMKKKKTSS. A compositionally biased stretch (basic and acidic residues) spans 365-382; sequence FHSKDNENDKSESGLRKR. The segment covering 802-814 has biased composition (polar residues); sequence DYLSDNHSLSNSE. In terms of domain architecture, WH2 spans 954 to 972; the sequence is ETGDFLQQIRTQQFNLRPV.

The protein belongs to the SCAR/WAVE family. As to quaternary structure, binds BRK1. Interacts with SPK1, ABI1, ABI2, ABI3 and ABI4. In terms of tissue distribution, expressed in expanding cotyledons, expanding leaves and expanding siliques containing developing embryos. Detected in unopened flower buds. Reduced expression in mature leaves and mature cotyledons.

Its subcellular location is the cytoplasm. It is found in the cytoskeleton. In terms of biological role, involved in regulation of actin and microtubule organization. Part of a WAVE complex that activates the Arp2/3 complex. Regulates trichome branch positioning and expansion. The polypeptide is Protein SCAR3 (SCAR3) (Arabidopsis thaliana (Mouse-ear cress)).